Consider the following 142-residue polypeptide: Large ribosomal subunit protein uL11 (142 aa).

It belongs to the universal ribosomal protein uL11 family. As to quaternary structure, part of the ribosomal stalk of the 50S ribosomal subunit. Interacts with L10 and the large rRNA to form the base of the stalk. L10 forms an elongated spine to which L12 dimers bind in a sequential fashion forming a multimeric L10(L12)X complex. Post-translationally, one or more lysine residues are methylated.

Forms part of the ribosomal stalk which helps the ribosome interact with GTP-bound translation factors. The polypeptide is Large ribosomal subunit protein uL11 (Shewanella sp. (strain W3-18-1)).